The following is a 123-amino-acid chain: Non-specific lipid-transfer protein 3 (123 aa).

A signal peptide spans 1 to 25; sequence MASSGQLLKLVCLVAVMCCMAVGGP. 4 disulfides stabilise this stretch: cysteine 33–cysteine 80, cysteine 43–cysteine 57, cysteine 58–cysteine 105, and cysteine 78–cysteine 119.

The protein belongs to the plant LTP family.

Plant non-specific lipid-transfer proteins transfer phospholipids as well as galactolipids across membranes. May play a role in wax or cutin deposition in the cell walls of expanding epidermal cells and certain secretory tissues. This Prunus dulcis (Almond) protein is Non-specific lipid-transfer protein 3.